Reading from the N-terminus, the 171-residue chain is ATP synthase subunit b (171 aa).

The helical transmembrane segment at 2 to 22 (FVVKMVLGFLILLSPLCATGL) threads the bilayer.

Belongs to the ATPase B chain family. In terms of assembly, F-type ATPases have 2 components, F(1) - the catalytic core - and F(0) - the membrane proton channel. F(1) has five subunits: alpha(3), beta(3), gamma(1), delta(1), epsilon(1). F(0) has three main subunits: a(1), b(2) and c(10-14). The alpha and beta chains form an alternating ring which encloses part of the gamma chain. F(1) is attached to F(0) by a central stalk formed by the gamma and epsilon chains, while a peripheral stalk is formed by the delta and b chains.

Its subcellular location is the cell inner membrane. In terms of biological role, f(1)F(0) ATP synthase produces ATP from ADP in the presence of a proton or sodium gradient. F-type ATPases consist of two structural domains, F(1) containing the extramembraneous catalytic core and F(0) containing the membrane proton channel, linked together by a central stalk and a peripheral stalk. During catalysis, ATP synthesis in the catalytic domain of F(1) is coupled via a rotary mechanism of the central stalk subunits to proton translocation. Component of the F(0) channel, it forms part of the peripheral stalk, linking F(1) to F(0). The polypeptide is ATP synthase subunit b (Helicobacter pylori (strain ATCC 700392 / 26695) (Campylobacter pylori)).